Reading from the N-terminus, the 453-residue chain is MDRRIFGLENEYGVTCTFRGQRRLSPDEVARYLFRRVVSWGRSSNVFLRNGARLYLDVGSHPEYATPECDNVTELVTHDKAGERILEGLLVDAERRLHEEGIAGDVYLFKNNTDSAGNSYGCHENYLVARHGEFSRLADILIPFLVTRQLLCGAGKVLQTPRGAVYCVSQRAEHIWEGVSSATTRSRPIINTRDEPHADAERYRRLHVIVGDSNMSETTMLLKVGATDLVLRMIEAGTVMRDLTLENPIRAIREVSHDITGRRKVRLASGREASALEVQREYYEKAVDFCERRGIRTGTVEQVLELWGRTLDAIEAEDLDRIGTEIDWVMKYKLIERYRAKHNMTMSHPRVAQIDLAYHDIHRRRGLYYLLEKRGQATRICNDLKIFEGKSVPPQTTRARLRGDFIRRAQEQRRDFTVDWVHLKLNDQAQRTVLCKDPFRSVDDRVEKLIAGM.

Residue Glu9 participates in Mg(2+) binding. Position 53 (Arg53) interacts with ATP. A Mg(2+)-binding site is contributed by Tyr55. Asp57 functions as the Proton acceptor in the catalytic mechanism. Glu63 contributes to the Mg(2+) binding site. Residues Thr66 and Trp420 each coordinate ATP.

It belongs to the Pup ligase/Pup deamidase family. Pup-conjugating enzyme subfamily.

It carries out the reaction ATP + [prokaryotic ubiquitin-like protein]-L-glutamate + [protein]-L-lysine = ADP + phosphate + N(6)-([prokaryotic ubiquitin-like protein]-gamma-L-glutamyl)-[protein]-L-lysine.. Its pathway is protein degradation; proteasomal Pup-dependent pathway. The protein operates within protein modification; protein pupylation. Catalyzes the covalent attachment of the prokaryotic ubiquitin-like protein modifier Pup to the proteasomal substrate proteins, thereby targeting them for proteasomal degradation. This tagging system is termed pupylation. The ligation reaction involves the side-chain carboxylate of the C-terminal glutamate of Pup and the side-chain amino group of a substrate lysine. This chain is Pup--protein ligase, found in Streptomyces avermitilis (strain ATCC 31267 / DSM 46492 / JCM 5070 / NBRC 14893 / NCIMB 12804 / NRRL 8165 / MA-4680).